Reading from the N-terminus, the 256-residue chain is Triosephosphate isomerase (256 aa).

10 to 12 (NWK) is a binding site for substrate. The Electrophile role is filled by His-97. Glu-169 functions as the Proton acceptor in the catalytic mechanism. Substrate is bound by residues Gly-175, Ser-214, and 235–236 (GG).

Belongs to the triosephosphate isomerase family. As to quaternary structure, homodimer.

The protein localises to the cytoplasm. It catalyses the reaction D-glyceraldehyde 3-phosphate = dihydroxyacetone phosphate. The protein operates within carbohydrate biosynthesis; gluconeogenesis. It functions in the pathway carbohydrate degradation; glycolysis; D-glyceraldehyde 3-phosphate from glycerone phosphate: step 1/1. In terms of biological role, involved in the gluconeogenesis. Catalyzes stereospecifically the conversion of dihydroxyacetone phosphate (DHAP) to D-glyceraldehyde-3-phosphate (G3P). The polypeptide is Triosephosphate isomerase (Actinobacillus pleuropneumoniae serotype 7 (strain AP76)).